A 438-amino-acid polypeptide reads, in one-letter code: Glucosamine kinase (438 aa).

ATP is bound by residues lysine 133, 186–188 (AYL), and aspartate 193. Position 300 (aspartate 300) interacts with D-glucosamine. 3 residues coordinate Mg(2+): glutamine 305, aspartate 317, and aspartate 319. Residues 405-420 (QEVREYLYAVRHLPHW) carry the Substrate specificity determinant motif motif. Position 409 (glutamate 409) interacts with D-glucosamine.

The protein belongs to the actinobacterial glucosamine kinase family. Monomer. Mg(2+) is required as a cofactor.

It catalyses the reaction D-glucosamine + ATP = D-glucosamine 6-phosphate + ADP + H(+). Functionally, catalyzes the ATP-dependent phosphorylation of D-glucosamine (GlcN) to D-glucosamine 6-phosphate. May be involved in the phosphorylation of acquired extracellular GlcN derived from the hydrolysis of chitosan, i.e., in the incorporation of exogenous GlcN into the bacterial GlcNAc metabolism. To a lesser extent, is also active on glucose, but is unable to phosphorylate maltose, 18 other sugars and several aminoglycoside antibiotics. This is Glucosamine kinase from Streptacidiphilus jiangxiensis.